We begin with the raw amino-acid sequence, 591 residues long: L-fucose isomerase (591 aa).

Active-site proton acceptor residues include Glu337 and Asp361. Mn(2+) contacts are provided by Glu337, Asp361, and His528.

This sequence belongs to the L-fucose isomerase family. Homohexamer. Mn(2+) serves as cofactor.

It is found in the cytoplasm. The enzyme catalyses L-fucose = L-fuculose. The catalysed reaction is D-arabinose = D-ribulose. It catalyses the reaction L-xylopyranose = L-xylulose. It participates in carbohydrate degradation; L-fucose degradation; L-lactaldehyde and glycerone phosphate from L-fucose: step 1/3. Its activity is regulated as follows. Inhibited by ribitol, L-arabitol and dulcitol. Isomerization of L-xylulose to L-xylose is inhibited by xylitol. Converts the aldose L-fucose into the corresponding ketose L-fuculose. Also converts D-arabinose into D-ribulose. In addition, catalyzes the isomerization of L-xylulose to L-xylose. The protein is L-fucose isomerase of Escherichia coli (strain K12).